We begin with the raw amino-acid sequence, 333 residues long: Zinc-type alcohol dehydrogenase-like protein SACOL2177 (333 aa).

Belongs to the zinc-containing alcohol dehydrogenase family. Quinone oxidoreductase subfamily.

In Staphylococcus aureus (strain COL), this protein is Zinc-type alcohol dehydrogenase-like protein SACOL2177.